A 420-amino-acid chain; its full sequence is Glutaryl-CoA dehydrogenase, mitochondrial (420 aa).

Position 125 to 126 (125 to 126 (RS)) interacts with substrate. FAD-binding positions include 164–167 (FGLT), S173, and 198–200 (WIT). S173 lines the substrate pocket. Substrate is bound by residues 273 to 277 (FSCLN) and R280. E400 (proton acceptor) is an active-site residue. FAD-binding residues include T402 and F420.

The protein belongs to the acyl-CoA dehydrogenase family. It depends on FAD as a cofactor.

The protein localises to the mitochondrion matrix. The catalysed reaction is glutaryl-CoA + oxidized [electron-transfer flavoprotein] + 2 H(+) = (2E)-butenoyl-CoA + reduced [electron-transfer flavoprotein] + CO2. It participates in amino-acid metabolism; lysine degradation. The protein operates within amino-acid metabolism; tryptophan metabolism. The protein is Glutaryl-CoA dehydrogenase, mitochondrial (gcdh) of Dictyostelium discoideum (Social amoeba).